Consider the following 515-residue polypeptide: ATP synthase subunit alpha (515 aa).

Residue 169–176 (GDRQTGKT) participates in ATP binding.

The protein belongs to the ATPase alpha/beta chains family. In terms of assembly, F-type ATPases have 2 components, CF(1) - the catalytic core - and CF(0) - the membrane proton channel. CF(1) has five subunits: alpha(3), beta(3), gamma(1), delta(1), epsilon(1). CF(0) has three main subunits: a(1), b(2) and c(9-12). The alpha and beta chains form an alternating ring which encloses part of the gamma chain. CF(1) is attached to CF(0) by a central stalk formed by the gamma and epsilon chains, while a peripheral stalk is formed by the delta and b chains.

It localises to the cell inner membrane. It carries out the reaction ATP + H2O + 4 H(+)(in) = ADP + phosphate + 5 H(+)(out). Functionally, produces ATP from ADP in the presence of a proton gradient across the membrane. The alpha chain is a regulatory subunit. The protein is ATP synthase subunit alpha of Neisseria meningitidis serogroup C (strain 053442).